The sequence spans 86 residues: Hepcidin-1 (86 aa).

Residues 1 to 22 form the signal peptide; it reads MKAFSVAVVLVIACMFILESTA. A propeptide spanning residues 23–59 is cleaved from the precursor; it reads VPFSEVRTEEVGSFDSPVGEHQQPGGESMHLPEPFRF. Cystine bridges form between Cys68–Cys84, Cys71–Cys74, Cys72–Cys80, and Cys75–Cys83.

This sequence belongs to the hepcidin family.

The protein resides in the secreted. Its function is as follows. Seems to act as a signaling molecule involved in the maintenance of iron homeostasis. Seems to be required in conjunction with HFE to regulate both intestinal iron absorption and iron storage in macrophages. May also have antimicrobial activity. The polypeptide is Hepcidin-1 (hamp1) (Salmo salar (Atlantic salmon)).